The primary structure comprises 605 residues: Glucose oxidase (605 aa).

The first 18 residues, 1-18, serve as a signal peptide directing secretion; that stretch reads MVSVFLSTLLLAAATVQA. Positions 52, 53, and 73 each coordinate FAD. A glycan (N-linked (GlcNAc...) asparagine) is linked at Asn111. Positions 125, 129, 130, and 132 each coordinate FAD. N-linked (GlcNAc...) asparagine glycosylation is found at Asn183 and Asn190. Cys186 and Cys228 are disulfide-bonded. Val272 contributes to the FAD binding site. N-linked (GlcNAc...) asparagine glycans are attached at residues Asn335, Asn375, Asn410, and Asn519. Catalysis depends on His538, which acts as the Proton acceptor. Residues Lys559 and Val560 each coordinate O2. The FAD site is built by Gly571 and Met583.

The protein belongs to the GMC oxidoreductase family. In terms of assembly, homodimer. Requires FAD as cofactor.

It is found in the secreted. The protein localises to the cell wall. It localises to the cytoplasmic vesicle. The catalysed reaction is beta-D-glucose + O2 = D-glucono-1,5-lactone + H2O2. Functionally, glucose oxidase catalyzes the oxidation of beta-D-glucose to D-glucono-delta-lactone and hydrogen peroxide in the presence of molecular oxygen. D-glucono-delta-lactone is sequentially hydrolyzed by lactonase to D-gluconic acid, and the resulting hydrogen peroxide is hydrolyzed by catalase to oxygen and water. Glucose oxidase alone indirectly causes toxicity in the presence of glucose and is the active compound of the antifungal antibiotic talaron. Responsible for inhibition of germination of microsclerotia of Verticillium dahliae. This chain is Glucose oxidase, found in Talaromyces flavus.